The primary structure comprises 225 residues: UPF0758 protein Sbal223_0402 (225 aa).

In terms of domain architecture, MPN spans 102-224; that stretch reads VLTNPDLTRD…IVSFAERGWI (123 aa). 3 residues coordinate Zn(2+): H173, H175, and D186. Positions 173–186 match the JAMM motif motif; it reads HNHPSGIAEPSQAD.

This sequence belongs to the UPF0758 family.

The polypeptide is UPF0758 protein Sbal223_0402 (Shewanella baltica (strain OS223)).